Reading from the N-terminus, the 185-residue chain is DAN domain family member 5 (185 aa).

The signal sequence occupies residues 1–23; the sequence is MFRSQFTTLLGLFSGAWLPTGSG. N-linked (GlcNAc...) asparagine glycosylation is present at Asn-39. Cystine bridges form between Cys-97–Cys-144, Cys-111–Cys-158, Cys-121–Cys-179, and Cys-125–Cys-181. One can recognise a CTCK domain in the interval 97 to 182; that stretch reads CKALSFVQVI…TVLVQKCQCR (86 aa).

The protein belongs to the DAN family. As to expression, expressed throughout the neural retina and in the photoreceptor nuclear layer. In the retina, widely expressed in inner nuclear layer, as well as in the ganglion cell layer.

It is found in the secreted. Its function is as follows. Antagonist of the extracellular signaling protein NODAL, which is required for correct left-right patterning during embryonic development. Antagonist of BMP4 signaling. Antagonist of TGF-beta signaling. Independently of its role in left-right axis establishment, plays a role during heart development, possibly through the regulation of TGF-beta/Nodal signaling pathway. Displays anti-angiogenic activity by inhibiting endothelial sprouting, migration, and proliferation. Once internalized by endothelial cells, may alter their redox and glycolytic balance. The sequence is that of DAN domain family member 5 (Dand5) from Mus musculus (Mouse).